Reading from the N-terminus, the 542-residue chain is Zinc finger CCHC domain-containing protein 7 (542 aa).

A disordered region spans residues 110-144 (QAQEKTQSPATPRSNKVANKCKRSNKKPEPEESPS). Over residues 112–126 (QEKTQSPATPRSNKV) the composition is skewed to polar residues. Residues Lys-129 and Lys-136 each participate in a glycyl lysine isopeptide (Lys-Gly) (interchain with G-Cter in SUMO2) cross-link. Residue Ser-142 is modified to Phosphoserine. Glycyl lysine isopeptide (Lys-Gly) (interchain with G-Cter in SUMO2) cross-links involve residues Lys-236 and Lys-251. 3 consecutive CCHC-type zinc fingers follow at residues 238–255 (VTCR…NCPL), 260–277 (RPCC…GCPA), and 301–318 (KRCD…ACPE). Residue Lys-336 forms a Glycyl lysine isopeptide (Lys-Gly) (interchain with G-Cter in SUMO2) linkage. The CCHC-type 4 zinc-finger motif lies at 345-362 (VYCYNCAQKGHYGHECTE). Residues 396–542 (LKDIKKNGDF…RKKKPKSSGF (147 aa)) form a disordered region. A Glycyl lysine isopeptide (Lys-Gly) (interchain with G-Cter in SUMO2) cross-link involves residue Lys-410. Positions 412–421 (PHGEETDRYH) are enriched in basic and acidic residues. Residues 422–435 (HDRRKSRFSGKRSR) are compositionally biased toward basic residues. Residue Lys-432 forms a Glycyl lysine isopeptide (Lys-Gly) (interchain with G-Cter in SUMO2) linkage. The span at 436–456 (WPRESKETQKEKTRGREGEKH) shows a compositional bias: basic and acidic residues. Lys-474 is covalently cross-linked (Glycyl lysine isopeptide (Lys-Gly) (interchain with G-Cter in SUMO2)). A compositionally biased stretch (low complexity) spans 474 to 489 (KPNSSSSSNSQKPSKS). Residues Ser-478 and Ser-480 each carry the phosphoserine modification. Residues Lys-485 and Lys-488 each participate in a glycyl lysine isopeptide (Lys-Gly) (interchain with G-Cter in SUMO2) cross-link. Basic and acidic residues-rich tracts occupy residues 499 to 510 (LREEKLRRESMR) and 518 to 528 (FVEDGSHDDLF). Lys-531 is covalently cross-linked (Glycyl lysine isopeptide (Lys-Gly) (interchain with G-Cter in SUMO2)). A compositionally biased stretch (basic residues) spans 531–542 (KQRKKKPKSSGF).

As to quaternary structure, component of a nucleolar TRAMP-like complex, an ATP-dependent exosome regulatory complex consisting of a helicase (MTREX), an oligadenylate polymerase (TENT4B or TENT4A), and a substrate specific RNA-binding factor (ZCCHC7 or ZCCHC8). Several TRAMP-like complexes exist with specific compositions and are associated with nuclear, or nucleolar RNA exosomes.

Its subcellular location is the nucleus. It localises to the nucleolus. The polypeptide is Zinc finger CCHC domain-containing protein 7 (Zcchc7) (Rattus norvegicus (Rat)).